A 278-amino-acid chain; its full sequence is Diaminopimelate epimerase (278 aa).

The substrate site is built by Asn-11 and Asn-63. The active-site Proton donor is Cys-72. Substrate-binding positions include 73-74 (GN), Asn-160, Asn-193, and 211-212 (ER). Cys-220 acts as the Proton acceptor in catalysis. 221–222 (GT) lines the substrate pocket.

Belongs to the diaminopimelate epimerase family. As to quaternary structure, homodimer.

It localises to the cytoplasm. It carries out the reaction (2S,6S)-2,6-diaminopimelate = meso-2,6-diaminopimelate. It functions in the pathway amino-acid biosynthesis; L-lysine biosynthesis via DAP pathway; DL-2,6-diaminopimelate from LL-2,6-diaminopimelate: step 1/1. In terms of biological role, catalyzes the stereoinversion of LL-2,6-diaminopimelate (L,L-DAP) to meso-diaminopimelate (meso-DAP), a precursor of L-lysine and an essential component of the bacterial peptidoglycan. The protein is Diaminopimelate epimerase of Desulforudis audaxviator (strain MP104C).